The sequence spans 66 residues: Large ribosomal subunit protein eL24 (66 aa).

4 residues coordinate Zn(2+): Cys-6, Cys-9, Cys-32, and Cys-36. Residues 6–36 (CSFCGKSIEPASGFLYVRKDGSVLNFCSRKC) form a C4-type zinc finger.

It belongs to the eukaryotic ribosomal protein eL24 family. In terms of assembly, part of the 50S ribosomal subunit. Forms a cluster with proteins L3 and L14. Zn(2+) is required as a cofactor.

In terms of biological role, binds to the 23S rRNA. This chain is Large ribosomal subunit protein eL24, found in Picrophilus torridus (strain ATCC 700027 / DSM 9790 / JCM 10055 / NBRC 100828 / KAW 2/3).